Reading from the N-terminus, the 371-residue chain is Putative ribonuclease 3 (371 aa).

The 127-residue stretch at A10–D136 folds into the RNase III domain.

Belongs to the IIV-6 142R family.

The enzyme catalyses Endonucleolytic cleavage to 5'-phosphomonoester.. Its function is as follows. Digests double-stranded RNA. The polypeptide is Putative ribonuclease 3 (Frog virus 3 (isolate Goorha) (FV-3)).